The chain runs to 176 residues: Disulfide bond formation protein B (176 aa).

The Cytoplasmic segment spans residues 1 to 14 (MLRFLNQCSQGRGA). A helical transmembrane segment spans residues 15–31 (WLLMAFTALALELTALW). Residues 32–49 (FQHVMLLKPCVLCIYERC) lie on the Periplasmic side of the membrane. The cysteines at positions 41 and 44 are disulfide-linked. The chain crosses the membrane as a helical span at residues 50–65 (ALFGVLGAALIGAIAP). Residues 66–71 (KTPLRY) lie on the Cytoplasmic side of the membrane. A helical transmembrane segment spans residues 72-89 (VAMVIWLYSAFRGVQLTY). Over 90–144 (EHTMLQLYPSPFATCDFMVRFPEWLPLDKWVPQVFVASGDCAERQWDFLGLEMPQ) the chain is Periplasmic. The cysteines at positions 104 and 130 are disulfide-linked. A helical membrane pass occupies residues 145-163 (WLLGIFIAYLIVAVLVMIS). The Cytoplasmic portion of the chain corresponds to 164–176 (QPFKAKKRDLFGR).

The protein belongs to the DsbB family.

Its subcellular location is the cell inner membrane. Its function is as follows. Required for disulfide bond formation in some periplasmic proteins. Acts by oxidizing the DsbA protein. The polypeptide is Disulfide bond formation protein B (Shigella sonnei (strain Ss046)).